Consider the following 216-residue polypeptide: Trypsin inhibitor A (216 aa).

Positions 1 to 24 are cleaved as a signal peptide; sequence MKSTIFFLFLFCAFTTSYLPSAIA. Cystine bridges form between Cys-63–Cys-110 and Cys-160–Cys-169. A propeptide spanning residues 206 to 216 is cleaved from the precursor; it reads AKKNHGLSRSE.

This sequence belongs to the protease inhibitor I3 (leguminous Kunitz-type inhibitor) family.

Inhibition of trypsin. In Glycine max (Soybean), this protein is Trypsin inhibitor A (KTI3).